The following is a 312-amino-acid chain: Beta-ketoacyl-[acyl-carrier-protein] synthase III (312 aa).

Active-site residues include C112 and H237. Residues 238–242 (QANIR) are ACP-binding. Residue N267 is part of the active site.

It belongs to the thiolase-like superfamily. FabH family. As to quaternary structure, homodimer.

The protein localises to the cytoplasm. The enzyme catalyses malonyl-[ACP] + acetyl-CoA + H(+) = 3-oxobutanoyl-[ACP] + CO2 + CoA. It functions in the pathway lipid metabolism; fatty acid biosynthesis. Functionally, catalyzes the condensation reaction of fatty acid synthesis by the addition to an acyl acceptor of two carbons from malonyl-ACP. Catalyzes the first condensation reaction which initiates fatty acid synthesis and may therefore play a role in governing the total rate of fatty acid production. Possesses both acetoacetyl-ACP synthase and acetyl transacylase activities. Its substrate specificity determines the biosynthesis of branched-chain and/or straight-chain of fatty acids. This Oceanobacillus iheyensis (strain DSM 14371 / CIP 107618 / JCM 11309 / KCTC 3954 / HTE831) protein is Beta-ketoacyl-[acyl-carrier-protein] synthase III.